Reading from the N-terminus, the 252-residue chain is MVTNVGEQLKKQPVLRGGGFTFKQFFVAHDRCAMKVGTDGVLLGAWVPVLHARRVLDIGCGSGLIALMIAQRSLPQVQIDGVELEPAAAQQASSNVELSPWAERIHIHQQDIHQFAENHPHQYDLIVSNPPYFAPAIACRDEARDTARYTGSLTHDALLNCAEKLITEDGMFCVVLPHELGIEFARLAGQQGWFVRCQVDIRDRPGKPLHRMLLTLSRQAGETVYQHLALRQSEGVYSPEFCQLISDFYLNY.

It belongs to the methyltransferase superfamily. tRNA (adenine-N(6)-)-methyltransferase family.

It localises to the cytoplasm. It carries out the reaction adenosine(37) in tRNA1(Val) + S-adenosyl-L-methionine = N(6)-methyladenosine(37) in tRNA1(Val) + S-adenosyl-L-homocysteine + H(+). Specifically methylates the adenine in position 37 of tRNA(1)(Val) (anticodon cmo5UAC). This Yersinia pseudotuberculosis serotype IB (strain PB1/+) protein is tRNA1(Val) (adenine(37)-N6)-methyltransferase.